A 321-amino-acid chain; its full sequence is MRVSQVYRWQIPMDAGVVLRERRLKTRDGLFIRLQEDEREGWGEISPLPGFSNETLEEAQTALLAWAQAWRDGAEPPLPTLPSVAFGISCAQAELYGELPQAADYRAAPLCSGDPDELFAKLAAMPGEKVAKVKVGLWEAVRDGMVVNLLLEAIPDLQLRLDANRAWTPLKAQQFAKYVNPAYRQRIAFLEEPCKTREDSRAFSRETGIAIAWDESLREADFRFVAEPGVRAVVIKPTLTGSVQKVQQQVAAAHALGLSAVISSSIESSLGLTQLARVAAWLTPQTIPGLDTLALMSAQLVRPWPESTLPMINIDALEPLL.

Lysine 134 acts as the Proton donor in catalysis. Mg(2+) contacts are provided by aspartate 162, glutamate 191, and aspartate 214. Lysine 236 serves as the catalytic Proton acceptor.

Belongs to the mandelate racemase/muconate lactonizing enzyme family. MenC type 1 subfamily. Requires a divalent metal cation as cofactor.

The catalysed reaction is (1R,6R)-6-hydroxy-2-succinyl-cyclohexa-2,4-diene-1-carboxylate = 2-succinylbenzoate + H2O. Its pathway is quinol/quinone metabolism; 1,4-dihydroxy-2-naphthoate biosynthesis; 1,4-dihydroxy-2-naphthoate from chorismate: step 4/7. It functions in the pathway quinol/quinone metabolism; menaquinone biosynthesis. Its function is as follows. Converts 2-succinyl-6-hydroxy-2,4-cyclohexadiene-1-carboxylate (SHCHC) to 2-succinylbenzoate (OSB). The polypeptide is o-succinylbenzoate synthase (Klebsiella pneumoniae (strain 342)).